The chain runs to 59 residues: uncharacterized protein (59 aa).

This is an uncharacterized protein from Acidianus hospitalis (AFV-1).